The following is a 161-amino-acid chain: MIIMGLDPGIAACGYGIIHAKGTKLECLACGVLRTYSDESATKRLESIYQGVSNLISEFSPNTVAVESLFFAKNSKTAMKVGQAKGVLMLAAAHNNLEIFEYTPLQVKQGVCGYGSASKEQVQKMVKQILSLDKIPKPDDAADALAVSLCHSQAYRLRTRL.

Catalysis depends on residues Asp7, Glu67, and Asp140. The Mg(2+) site is built by Asp7, Glu67, and Asp140.

Belongs to the RuvC family. As to quaternary structure, homodimer which binds Holliday junction (HJ) DNA. The HJ becomes 2-fold symmetrical on binding to RuvC with unstacked arms; it has a different conformation from HJ DNA in complex with RuvA. In the full resolvosome a probable DNA-RuvA(4)-RuvB(12)-RuvC(2) complex forms which resolves the HJ. It depends on Mg(2+) as a cofactor.

It is found in the cytoplasm. The enzyme catalyses Endonucleolytic cleavage at a junction such as a reciprocal single-stranded crossover between two homologous DNA duplexes (Holliday junction).. Functionally, the RuvA-RuvB-RuvC complex processes Holliday junction (HJ) DNA during genetic recombination and DNA repair. Endonuclease that resolves HJ intermediates. Cleaves cruciform DNA by making single-stranded nicks across the HJ at symmetrical positions within the homologous arms, yielding a 5'-phosphate and a 3'-hydroxyl group; requires a central core of homology in the junction. The consensus cleavage sequence is 5'-(A/T)TT(C/G)-3'. Cleavage occurs on the 3'-side of the TT dinucleotide at the point of strand exchange. HJ branch migration catalyzed by RuvA-RuvB allows RuvC to scan DNA until it finds its consensus sequence, where it cleaves and resolves the cruciform DNA. This Natranaerobius thermophilus (strain ATCC BAA-1301 / DSM 18059 / JW/NM-WN-LF) protein is Crossover junction endodeoxyribonuclease RuvC.